The sequence spans 436 residues: Eukaryotic peptide chain release factor subunit 1 (436 aa).

The protein belongs to the eukaryotic release factor 1 family. Heterodimer of two subunits, one of which binds GTP.

The protein resides in the cytoplasm. Its function is as follows. Directs the termination of nascent peptide synthesis (translation) in response to the termination codons UAA and UAG. In B.musculus UGA codes for tryptophan. The protein is Eukaryotic peptide chain release factor subunit 1 (eRF1) of Blepharisma musculus.